A 386-amino-acid chain; its full sequence is Patatin-16 (386 aa).

The first 23 residues, 1–23, serve as a signal peptide directing secretion; sequence MATTKSFLILIVMILATTSSTFA. The PNPLA domain maps to 32 to 229; the sequence is LSIDGGGIKG…TVADPALLSV (198 aa). Residues 36–41 carry the GXGXXG motif; sequence GGGIKG. A GXSXG motif is present at residues 75–79; the sequence is GTSTG. S77 functions as the Nucleophile in the catalytic mechanism. N115 carries an N-linked (GlcNAc...) asparagine glycan. Catalysis depends on D215, which acts as the Proton acceptor. The DGA/G signature appears at 215–217; that stretch reads DGA. A coiled-coil region spans residues 360–384; that stretch reads ETYEEALKRFAKLLSDRKKLRANKA.

This sequence belongs to the patatin family.

It localises to the vacuole. Functionally, probable lipolytic acyl hydrolase (LAH), an activity which is thought to be involved in the response of tubers to pathogens. This Solanum tuberosum (Potato) protein is Patatin-16.